A 748-amino-acid chain; its full sequence is Catalase-peroxidase (748 aa).

The segment at residues 91-236 (WHSAGTYRVG…LAAVQMGLIY (146 aa)) is a cross-link (tryptophyl-tyrosyl-methioninium (Trp-Tyr) (with M-262)). The active-site Proton acceptor is histidine 92. The segment at 201–223 (AQPVADKAGHGKEHGRTDGGRNL) is disordered. Residues 207-221 (KAGHGKEHGRTDGGR) show a composition bias toward basic and acidic residues. The segment at residues 236-262 (YVNPEGPDGNPDPQASAHDIRETFARM) is a cross-link (tryptophyl-tyrosyl-methioninium (Tyr-Met) (with W-91)). Residue histidine 277 participates in heme b binding.

The protein belongs to the peroxidase family. Peroxidase/catalase subfamily. Homodimer or homotetramer. Requires heme b as cofactor. In terms of processing, formation of the three residue Trp-Tyr-Met cross-link is important for the catalase, but not the peroxidase activity of the enzyme.

It catalyses the reaction H2O2 + AH2 = A + 2 H2O. The enzyme catalyses 2 H2O2 = O2 + 2 H2O. Its function is as follows. Bifunctional enzyme with both catalase and broad-spectrum peroxidase activity. The sequence is that of Catalase-peroxidase from Bordetella avium (strain 197N).